We begin with the raw amino-acid sequence, 60 residues long: MSDKTVKVQLVKSLIGTRETHRATVRGLGLRRLNSVSELQDTPAVRGMINKVSYLVKVIS.

It belongs to the universal ribosomal protein uL30 family. As to quaternary structure, part of the 50S ribosomal subunit.

The polypeptide is Large ribosomal subunit protein uL30 (Paraburkholderia phytofirmans (strain DSM 17436 / LMG 22146 / PsJN) (Burkholderia phytofirmans)).